A 224-amino-acid chain; its full sequence is MVYESGNKPGPENPTFSSDLSLSDSLVKLKKKPCEVCGSDANELLMMTCFMCRDTREHTYCARVMFQRVPRLWICEECRDFSSVANKTANAQSSRTIQVEQVVVKQVRIDQTVPSPRTNQVVDNHQDPPIDQTDPSSTTIQVVDNENLIEAAPSSRSNQVVDNKDWIEAAPSLRSNQVVPVAPRIHEFTTDESSSPVSPCSLDDETNLFHFKYPSLSLPPLMKN.

The PHD-type zinc-finger motif lies at 31-81; it reads KKPCEVCGSDANELLMMTCFMCRDTREHTYCARVMFQRVPRLWICEECRDF. 8 residues coordinate Zn(2+): Cys-34, Cys-37, Cys-49, Cys-52, His-58, Cys-61, Cys-75, and Cys-78. The segment at 116 to 137 is disordered; sequence PRTNQVVDNHQDPPIDQTDPSS.

In terms of assembly, interacts directly with AIPP3/BDT1.

In terms of biological role, together with AIPP3/BDT1, cooperates to form a BAH-PHD bivalent histone reader complex able to read histone H3 lysine 27 trimethylation (H3K27me3) histone marks in order to regulate transcription, especially to prevent early flowering; promotes AIPP3/BDT1 binding to H3K27me3. The chain is PHD finger-containing protein 5 from Arabidopsis thaliana (Mouse-ear cress).